An 82-amino-acid polypeptide reads, in one-letter code: Myosin light chain alkali (82 aa).

Residues 7 to 42 enclose the EF-hand domain; sequence GCYEDFIECLKLYDKEENGTMMLAELQHALLALGES.

In terms of assembly, myosin is a hexamer of 2 heavy chains and 4 light chains.

The protein is Myosin light chain alkali (Mlc1) of Drosophila mauritiana (Fruit fly).